A 236-amino-acid chain; its full sequence is Hydantoin racemase (236 aa).

As to quaternary structure, homohexamer, homoheptamer or homooctamer.

The enzyme catalyses a D-5-monosubstituted hydantoin = a L-5-monosubstituted hydantoin. It carries out the reaction D-5-benzylhydantoin = L-5-benzylhydantoin. With respect to regulation, completely inhibited by HgCl(2) and iodoacetamide. Stimulated by dithiothreitol. Its function is as follows. Involved in the asymmetric conversion of racemic 5-substituted hydantoins to the corresponding L-amino acids. Catalyzes the racemization via enolization of D- and L-5-monosubstituted hydantoins. It shows preference for hydantoins with arylalkyl side chains such as 5-benzylhydantoin (BH) and, to a lesser extent, 5-(3-indolylmethylene)hydantoin (IMH). The protein is Hydantoin racemase of Paenarthrobacter aurescens (Arthrobacter aurescens).